The chain runs to 562 residues: Arginine--tRNA ligase (562 aa).

A 'HIGH' region motif is present at residues 121–131 (PNIAKPMGMGH).

This sequence belongs to the class-I aminoacyl-tRNA synthetase family. In terms of assembly, monomer.

Its subcellular location is the cytoplasm. It carries out the reaction tRNA(Arg) + L-arginine + ATP = L-arginyl-tRNA(Arg) + AMP + diphosphate. In Limosilactobacillus reuteri (strain DSM 20016) (Lactobacillus reuteri), this protein is Arginine--tRNA ligase.